The chain runs to 823 residues: Tax1-binding protein 1 homolog B (823 aa).

The stretch at 149–487 (VTTKASYLEQ…QKQVVKFNEQ (339 aa)) forms a coiled coil. Disordered stretches follow at residues 342 to 377 (HRQL…QQAN) and 486 to 519 (EQQG…STSD). The span at 356 to 368 (KALREQLRQKEEQ) shows a compositional bias: basic and acidic residues. A compositionally biased stretch (low complexity) spans 498–518 (AAAGPLSASPEASAPGSPSTS). A coiled-coil region spans residues 548-638 (QMLNEERERC…NREEEQKDSN (91 aa)). Residues 650–746 (MPYAQDDPSP…EPAAPEPAEF (97 aa)) form a disordered region. The segment covering 723-739 (LEEPEEPQSTQNDDEPA) has biased composition (acidic residues). 2 consecutive UBZ1-type zinc fingers follow at residues 762 to 788 (QKRC…VESH) and 789 to 815 (WKIC…VLTH). Residues Cys-765, Cys-768, His-784, His-788, Cys-792, Cys-795, His-811, and His-815 each coordinate Zn(2+).

In terms of tissue distribution, expressed at relatively high levels in both proximal and distal regions of the fin bud during pectoral fin development.

Its function is as follows. May have anti-apoptotic activity. The sequence is that of Tax1-binding protein 1 homolog B (tax1bp1b) from Danio rerio (Zebrafish).